An 88-amino-acid polypeptide reads, in one-letter code: MSKILLLLIRFYQYFISPLLGNNCRFHPTCSEYAKESITLYGSLKGLWRAFKRIIKCQPFYNGTVLYDTEVRCHARKSGNPVKNKEPK.

This sequence belongs to the UPF0161 family.

The protein localises to the cell inner membrane. Its function is as follows. Could be involved in insertion of integral membrane proteins into the membrane. This Rickettsia canadensis (strain McKiel) protein is Putative membrane protein insertion efficiency factor.